We begin with the raw amino-acid sequence, 55 residues long: Large ribosomal subunit protein bL33 (55 aa).

It belongs to the bacterial ribosomal protein bL33 family.

The protein is Large ribosomal subunit protein bL33 of Clavibacter sepedonicus (Clavibacter michiganensis subsp. sepedonicus).